The following is a 239-amino-acid chain: Sugar fermentation stimulation protein homolog (239 aa).

Belongs to the SfsA family.

The polypeptide is Sugar fermentation stimulation protein homolog (Rhizobium meliloti (strain 1021) (Ensifer meliloti)).